The sequence spans 318 residues: Ubiquitin-conjugating enzyme E2 J1 (318 aa).

Residues 1 to 282 (METRYNLKSP…QGQPPRAHHT (282 aa)) are Cytoplasmic-facing. A UBC core domain is found at 10–168 (PAVKRLMKEA…VLLPLKSGSG (159 aa)). Catalysis depends on Cys91, which acts as the Glycyl thioester intermediate. Position 184 is a phosphoserine (Ser184). A compositionally biased stretch (polar residues) spans 215 to 233 (PTTFQGATASTSYGAQNPS). Residues 215-283 (PTTFQGATAS…GQPPRAHHTE (69 aa)) form a disordered region. Low complexity predominate over residues 249 to 269 (SMSPRQRRAQQQSQRRPSTSP). Phosphoserine is present on residues Ser266 and Ser268. Residues 283-303 (EHGGSAMLIIILTLALAALIF) traverse the membrane as a helical; Anchor for type IV membrane protein segment. Topologically, residues 304-318 (RRIYLANEYIFDFEL) are lumenal.

Belongs to the ubiquitin-conjugating enzyme family. Component of the HRD1 complex, which comprises at least SYNV1/HRD1, DERL1/2, FAM8A1, HERPUD1/HERP, OS9, SEL1L and UBE2J1. Interacts with E3 ligase RNF26. Interacts with E3 ligase RNF133. Post-translationally, phosphorylated at Ser-184 in a cytosolic stress-dependent manner by MAP kinase p38 MAPKAPK2. In terms of processing, phosphorylated UBE2J1 is rapidly ubiquitinated and subsequently degraded by the proteasome.

Its subcellular location is the endoplasmic reticulum membrane. The catalysed reaction is S-ubiquitinyl-[E1 ubiquitin-activating enzyme]-L-cysteine + [E2 ubiquitin-conjugating enzyme]-L-cysteine = [E1 ubiquitin-activating enzyme]-L-cysteine + S-ubiquitinyl-[E2 ubiquitin-conjugating enzyme]-L-cysteine.. It functions in the pathway protein modification; protein ubiquitination. Catalyzes the covalent attachment of ubiquitin to other proteins. Functions in the selective degradation of misfolded membrane proteins from the endoplasmic reticulum (ERAD) and is essential for cells to recover from ER stress. Plays a role in MAPKAPK2-dependent translational control of TNF-alpha synthesis. Also acts as a platform for perinuclear positioning of the endosomal system by mediating ubiquitination of SQSTM1 through interaction with the E3 ubiquitin-protein ligase RNF26. Plays a role in male fecundity through the interaction with the E3 ubiquitin-protein ligase RNF133. This Mus musculus (Mouse) protein is Ubiquitin-conjugating enzyme E2 J1 (Ube2j1).